The primary structure comprises 717 residues: Polyribonucleotide nucleotidyltransferase (717 aa).

Residues aspartate 486 and aspartate 492 each contribute to the Mg(2+) site. The KH domain occupies 553-612; sequence PRMITVKINPEKIRDVIGKGGSTIQALTKETGCTIDIQEDGTITIASTSSEGMAEAKRRI. Positions 622–690 constitute an S1 motif domain; it reads GKIYSGTVLK…EKGRMRLSIK (69 aa). Positions 690 to 717 are disordered; sequence KAAKAEEGDVPATAPQAPGAGDATSQQQ.

Belongs to the polyribonucleotide nucleotidyltransferase family. The cofactor is Mg(2+).

Its subcellular location is the cytoplasm. It carries out the reaction RNA(n+1) + phosphate = RNA(n) + a ribonucleoside 5'-diphosphate. In terms of biological role, involved in mRNA degradation. Catalyzes the phosphorolysis of single-stranded polyribonucleotides processively in the 3'- to 5'-direction. The chain is Polyribonucleotide nucleotidyltransferase from Ralstonia nicotianae (strain ATCC BAA-1114 / GMI1000) (Ralstonia solanacearum).